The sequence spans 83 residues: Toxin TdNa3 (83 aa).

The signal sequence occupies residues 1–20 (MKGMIMLISCLMLIDVVVES). Residues 21–82 (KNGYIIEPKG…IFDYYNNKCG (62 aa)) enclose the LCN-type CS-alpha/beta domain. 4 disulfides stabilise this stretch: cysteine 31–cysteine 81, cysteine 35–cysteine 57, cysteine 43–cysteine 62, and cysteine 47–cysteine 64. The residue at position 81 (cysteine 81) is a Cysteine amide.

This sequence belongs to the long (4 C-C) scorpion toxin superfamily. Sodium channel inhibitor family. Beta subfamily. As to expression, expressed by the venom gland.

It localises to the secreted. Its function is as follows. Inhibits the sodium currents (Nav) in an apparent irreversible manner. Produces small depolarization and induces repetitive firing in squid axons. Is specific for arthropods (crickets, triatomides, crabs and squids), but is non-toxic to mice. The protein is Toxin TdNa3 of Tityus discrepans (Venezuelan scorpion).